We begin with the raw amino-acid sequence, 644 residues long: Fructose-1,6-bisphosphatase class 3 (644 aa).

The protein belongs to the FBPase class 3 family. Requires Mn(2+) as cofactor.

It catalyses the reaction beta-D-fructose 1,6-bisphosphate + H2O = beta-D-fructose 6-phosphate + phosphate. The protein operates within carbohydrate biosynthesis; gluconeogenesis. This chain is Fructose-1,6-bisphosphatase class 3, found in Oceanobacillus iheyensis (strain DSM 14371 / CIP 107618 / JCM 11309 / KCTC 3954 / HTE831).